The primary structure comprises 480 residues: Zinc metalloproteinase/disintegrin (480 aa).

The first 20 residues, 1–20 (MIQVLLITICLAVFPFQGSS), serve as a signal peptide directing secretion. Positions 21-190 (IVLDSGNLNE…KASQLNVSPD (170 aa)) are excised as a propeptide. Positions 197–391 (RFIKLAIYVD…HSPQCILNDP (195 aa)) constitute a Peptidase M12B domain. N-linked (GlcNAc...) asparagine glycosylation is found at Asn-259 and Asn-279. 9 cysteine pairs are disulfide-bonded: Cys-308/Cys-386, Cys-348/Cys-370, Cys-350/Cys-353, Cys-413/Cys-428, Cys-415/Cys-423, Cys-422/Cys-445, Cys-436/Cys-442, Cys-441/Cys-466, and Cys-454/Cys-473. His-333 is a Zn(2+) binding site. Glu-334 is a catalytic residue. Zn(2+)-binding residues include His-337 and His-343. Residues 399–480 (TPVSGNELLE…AGCPRNPFHA (82 aa)) form the Disintegrin domain. The short motif at 458–460 (RGD) is the Cell attachment site element.

It belongs to the venom metalloproteinase (M12B) family. P-II subfamily. P-IIa sub-subfamily. Monomer. It depends on Zn(2+) as a cofactor. As to expression, expressed by the venom gland.

The protein localises to the secreted. Functionally, impairs hemostasis in the envenomed animal. Its function is as follows. Inhibits platelet aggregation and bone resorption. This Gloydius halys (Chinese water mocassin) protein is Zinc metalloproteinase/disintegrin.